The sequence spans 74 residues: UPF0435 protein BcerKBAB4_0386 (74 aa).

It belongs to the UPF0435 family.

In Bacillus mycoides (strain KBAB4) (Bacillus weihenstephanensis), this protein is UPF0435 protein BcerKBAB4_0386.